The sequence spans 190 residues: Lipid A acyltransferase PagP (190 aa).

An N-terminal signal peptide occupies residues 1–18 (MKRLISCLTIICALNASA). Active-site residues include His-60, Asp-103, and Ser-104.

The protein belongs to the lipid A palmitoyltransferase family. Homodimer.

It localises to the cell outer membrane. It catalyses the reaction a lipid A + a 1,2-diacyl-sn-glycero-3-phosphocholine = a hepta-acyl lipid A + a 2-acyl-sn-glycero-3-phosphocholine. It carries out the reaction a lipid IVA + a 1,2-diacyl-sn-glycero-3-phosphocholine = a lipid IVB + a 2-acyl-sn-glycero-3-phosphocholine. The enzyme catalyses a lipid IIA + a 1,2-diacyl-sn-glycero-3-phosphocholine = a lipid IIB + a 2-acyl-sn-glycero-3-phosphocholine. In terms of biological role, transfers a fatty acid residue from the sn-1 position of a phospholipid to the N-linked hydroxyfatty acid chain on the proximal unit of lipid A or its precursors. The chain is Lipid A acyltransferase PagP from Legionella pneumophila serogroup 1 (strain 2300/99 Alcoy).